Reading from the N-terminus, the 330-residue chain is Ferredoxin--NADP reductase 2 (330 aa).

Residues glutamate 37, glutamine 45, tyrosine 50, valine 90, phenylalanine 124, aspartate 286, and threonine 327 each contribute to the FAD site.

The protein belongs to the ferredoxin--NADP reductase type 2 family. In terms of assembly, homodimer. It depends on FAD as a cofactor.

It carries out the reaction 2 reduced [2Fe-2S]-[ferredoxin] + NADP(+) + H(+) = 2 oxidized [2Fe-2S]-[ferredoxin] + NADPH. This Shouchella clausii (strain KSM-K16) (Alkalihalobacillus clausii) protein is Ferredoxin--NADP reductase 2.